Here is a 577-residue protein sequence, read N- to C-terminus: Galectin-3-binding protein (577 aa).

Residues 1-18 (MALLWLLSVFLLVPGTQG) form the signal peptide. An SRCR domain is found at 24-124 (MRLVNGASAN…HEKDAGVVCS (101 aa)). 3 cysteine pairs are disulfide-bonded: C49–C113, C62–C123, and C93–C103. N69 carries N-linked (GlcNAc...) asparagine glycosylation. N-linked (GlcNAc...) asparagine glycosylation occurs at N125. One can recognise a BTB domain in the interval 153–221 (CDLFIQVTGQ…FYSRRIEVSM (69 aa)). Residues 260-360 (PLDLYAYARA…MLPQELFELQ (101 aa)) enclose the BACK domain. 4 N-linked (GlcNAc...) asparagine glycosylation sites follow: N362, N398, N543, and N572.

In terms of assembly, homodimers and homomultimers. The multimers form ring-like structures with a diameter of 30-40 nm. Binds LGALS1 and LGALS3. Binds ITGB1, COL4A1, COL5A1, COL6A1, FN1 and NID. Interacts with PPIC (in vitro). The unglycosylated form interacts with PDE4DIP isoform 2/MMG8/SMYLE; this interaction may connect a pericentrosomal complex to the gamma-tubulin ring complex (gamma-TuRC) to promote microtubule assembly and acetylation. N-glycosylated. As to expression, detected in embryo, liver, spleen, kidney, lung, heart, intestine, thymus and lymph node.

The protein localises to the secreted. It localises to the extracellular space. Its subcellular location is the extracellular matrix. Functionally, promotes integrin-mediated cell adhesion. May stimulate host defense against viruses and tumor cells. This is Galectin-3-binding protein (Lgals3bp) from Mus musculus (Mouse).